Consider the following 465-residue polypeptide: Argininosuccinate lyase (465 aa).

This sequence belongs to the lyase 1 family. Argininosuccinate lyase subfamily.

The protein localises to the cytoplasm. The enzyme catalyses 2-(N(omega)-L-arginino)succinate = fumarate + L-arginine. Its pathway is amino-acid biosynthesis; L-arginine biosynthesis; L-arginine from L-ornithine and carbamoyl phosphate: step 3/3. The protein is Argininosuccinate lyase of Rhodopseudomonas palustris (strain ATCC BAA-98 / CGA009).